The following is a 117-amino-acid chain: Large ribosomal subunit protein bL19 (117 aa).

It belongs to the bacterial ribosomal protein bL19 family.

In terms of biological role, this protein is located at the 30S-50S ribosomal subunit interface and may play a role in the structure and function of the aminoacyl-tRNA binding site. The chain is Large ribosomal subunit protein bL19 from Shewanella piezotolerans (strain WP3 / JCM 13877).